The chain runs to 322 residues: Eukaryotic translation initiation factor 3 subunit I (322 aa).

5 WD repeats span residues 4-43 (GHERSITQIKYNREGDLLFSCSKDQKPNVWYSLNGERLGT), 46-85 (GHQGAVWCLDVDWETRKLITGAGDMTTKIWDVEYGTVIAS), 141-180 (MVESKITSMLWGPLDETIITGHDNGNIAIWDIRKGQKVVD), 184-223 (DHTAGINDMQLSKDGTMFVTASKDTTAKLFDSESLMCLKT), and 281-322 (GHFG…NIFE).

It belongs to the eIF-3 subunit I family. As to quaternary structure, component of the eukaryotic translation initiation factor 3 (eIF-3) complex. The eIF-3 complex interacts with pix.

Its subcellular location is the cytoplasm. Its function is as follows. Component of the eukaryotic translation initiation factor 3 (eIF-3) complex, which is involved in protein synthesis of a specialized repertoire of mRNAs and, together with other initiation factors, stimulates binding of mRNA and methionyl-tRNAi to the 40S ribosome. The eIF-3 complex specifically targets and initiates translation of a subset of mRNAs involved in cell proliferation. The polypeptide is Eukaryotic translation initiation factor 3 subunit I (Drosophila mojavensis (Fruit fly)).